The sequence spans 448 residues: Probable glycine dehydrogenase (decarboxylating) subunit 1 (448 aa).

This sequence belongs to the GcvP family. N-terminal subunit subfamily. The glycine cleavage system is composed of four proteins: P, T, L and H. In this organism, the P 'protein' is a heterodimer of two subunits.

It catalyses the reaction N(6)-[(R)-lipoyl]-L-lysyl-[glycine-cleavage complex H protein] + glycine + H(+) = N(6)-[(R)-S(8)-aminomethyldihydrolipoyl]-L-lysyl-[glycine-cleavage complex H protein] + CO2. Its function is as follows. The glycine cleavage system catalyzes the degradation of glycine. The P protein binds the alpha-amino group of glycine through its pyridoxal phosphate cofactor; CO(2) is released and the remaining methylamine moiety is then transferred to the lipoamide cofactor of the H protein. The protein is Probable glycine dehydrogenase (decarboxylating) subunit 1 of Listeria monocytogenes serotype 4a (strain HCC23).